Consider the following 249-residue polypeptide: Probable amino-acid import ATP-binding protein YxeO (249 aa).

The ABC transporter domain occupies 2–239 (ITVKNIRKAF…PKNERTKRFI (238 aa)). ATP is bound at residue 34-41 (GPSGSGKS).

This sequence belongs to the ABC transporter superfamily. In terms of assembly, the complex is composed of two ATP-binding proteins (YxeO), two transmembrane proteins (YxeN) and a solute-binding protein (YxeM).

The protein resides in the cell membrane. Functionally, probably part of the ABC transporter complex YxeMNO that could be involved in amino-acid import. May transport S-methylcysteine. Responsible for energy coupling to the transport system. This chain is Probable amino-acid import ATP-binding protein YxeO (yxeO), found in Bacillus subtilis (strain 168).